The primary structure comprises 167 residues: Large ribosomal subunit protein uL10 (167 aa).

The protein belongs to the universal ribosomal protein uL10 family. In terms of assembly, part of the ribosomal stalk of the 50S ribosomal subunit. The N-terminus interacts with L11 and the large rRNA to form the base of the stalk. The C-terminus forms an elongated spine to which L12 dimers bind in a sequential fashion forming a multimeric L10(L12)X complex.

Functionally, forms part of the ribosomal stalk, playing a central role in the interaction of the ribosome with GTP-bound translation factors. The polypeptide is Large ribosomal subunit protein uL10 (Streptococcus mutans serotype c (strain ATCC 700610 / UA159)).